The following is a 218-amino-acid chain: Ribosomal RNA small subunit methyltransferase G (218 aa).

S-adenosyl-L-methionine is bound by residues Gly-86, Leu-91, 137-138 (AE), and Arg-153.

It belongs to the methyltransferase superfamily. RNA methyltransferase RsmG family.

It is found in the cytoplasm. The enzyme catalyses guanosine(527) in 16S rRNA + S-adenosyl-L-methionine = N(7)-methylguanosine(527) in 16S rRNA + S-adenosyl-L-homocysteine. Its function is as follows. Specifically methylates the N7 position of guanine in position 527 of 16S rRNA. This is Ribosomal RNA small subunit methyltransferase G from Nitratidesulfovibrio vulgaris (strain ATCC 29579 / DSM 644 / CCUG 34227 / NCIMB 8303 / VKM B-1760 / Hildenborough) (Desulfovibrio vulgaris).